Here is a 275-residue protein sequence, read N- to C-terminus: Polyamine aminopropyltransferase (275 aa).

A PABS domain is found at 2–235 (EFWFTEKQTE…GMWTFTIGSK (234 aa)). Position 31 (Gln31) interacts with S-methyl-5'-thioadenosine. 2 residues coordinate spermidine: His62 and Asp86. S-methyl-5'-thioadenosine contacts are provided by residues Asp106 and 137–138 (DG). Asp155 (proton acceptor) is an active-site residue. Position 155–158 (155–158 (DSTE)) interacts with spermidine. Pro162 contacts S-methyl-5'-thioadenosine.

Belongs to the spermidine/spermine synthase family. As to quaternary structure, homodimer or homotetramer.

It localises to the cytoplasm. It carries out the reaction S-adenosyl 3-(methylsulfanyl)propylamine + putrescine = S-methyl-5'-thioadenosine + spermidine + H(+). It participates in amine and polyamine biosynthesis; spermidine biosynthesis; spermidine from putrescine: step 1/1. In terms of biological role, catalyzes the irreversible transfer of a propylamine group from the amino donor S-adenosylmethioninamine (decarboxy-AdoMet) to putrescine (1,4-diaminobutane) to yield spermidine. This Shouchella clausii (strain KSM-K16) (Alkalihalobacillus clausii) protein is Polyamine aminopropyltransferase.